Reading from the N-terminus, the 258-residue chain is UPF0246 protein LHK_02295 (258 aa).

Belongs to the UPF0246 family.

The protein is UPF0246 protein LHK_02295 of Laribacter hongkongensis (strain HLHK9).